Reading from the N-terminus, the 403-residue chain is Histidine--tRNA ligase (403 aa).

This sequence belongs to the class-II aminoacyl-tRNA synthetase family. As to quaternary structure, homodimer.

The protein resides in the cytoplasm. The enzyme catalyses tRNA(His) + L-histidine + ATP = L-histidyl-tRNA(His) + AMP + diphosphate + H(+). The polypeptide is Histidine--tRNA ligase (Sulfurovum sp. (strain NBC37-1)).